The following is a 247-amino-acid chain: Carboxy-S-adenosyl-L-methionine synthase (247 aa).

S-adenosyl-L-methionine contacts are provided by residues Tyr-39, Gly-64–Ser-66, Asp-89–Asn-90, Asp-117–Ile-118, Asn-132, and Arg-199.

It belongs to the class I-like SAM-binding methyltransferase superfamily. Cx-SAM synthase family. In terms of assembly, homodimer.

It carries out the reaction prephenate + S-adenosyl-L-methionine = carboxy-S-adenosyl-L-methionine + 3-phenylpyruvate + H2O. Its function is as follows. Catalyzes the conversion of S-adenosyl-L-methionine (SAM) to carboxy-S-adenosyl-L-methionine (Cx-SAM). The chain is Carboxy-S-adenosyl-L-methionine synthase from Escherichia coli O127:H6 (strain E2348/69 / EPEC).